Consider the following 33-residue polypeptide: Brevinin-2Ef (33 aa).

Cysteines 27 and 33 form a disulfide.

Expressed by the skin glands.

The protein resides in the secreted. Shows antibacterial activity against representative Gram-negative and Gram-positive bacterial species, and hemolytic activity. The protein is Brevinin-2Ef of Pelophylax ridibundus (Marsh frog).